Consider the following 148-residue polypeptide: Arginine repressor (148 aa).

The protein belongs to the ArgR family.

It localises to the cytoplasm. It functions in the pathway amino-acid biosynthesis; L-arginine biosynthesis [regulation]. Its function is as follows. Regulates arginine biosynthesis genes. This is Arginine repressor from Prosthecochloris aestuarii (strain DSM 271 / SK 413).